The following is a 160-amino-acid chain: Ubiquitin-like protein 4A (160 aa).

Positions 1–76 (MQLTVKALQG…LNLVVKPLEK (76 aa)) constitute a Ubiquitin-like domain. Lys48 is covalently cross-linked (Glycyl lysine isopeptide (Lys-Gly) (interchain with G-Cter in ubiquitin)). Positions 99 to 141 (WQLIAKVLARHFSAADASRVLDQLQRDYERSLSRLTLDDIERL) are required and sufficient for interaction with BAG6.

As to quaternary structure, component of the BAG6/BAT3 complex, at least composed of BAG6, UBL4A and GET4/TRC35. Interacts with BAG6; the interaction is direct and required for UBL4A protein stability. Interacts with USP13; may be indirect via BAG6. Polyubiquitinated. Ubiquitination by AMFR and deubiquitination by USP13 may regulate the interaction between the BAG6/BAT complex and SGTA and therefore may regulate client proteins fate.

The protein localises to the cytoplasm. Its subcellular location is the cytosol. It is found in the nucleus. Functionally, as part of a cytosolic protein quality control complex, the BAG6/BAT3 complex, maintains misfolded and hydrophobic patches-containing proteins in a soluble state and participates in their proper delivery to the endoplasmic reticulum or alternatively can promote their sorting to the proteasome where they undergo degradation. The BAG6/BAT3 complex is involved in the post-translational delivery of tail-anchored/type II transmembrane proteins to the endoplasmic reticulum membrane. Recruited to ribosomes, it interacts with the transmembrane region of newly synthesized tail-anchored proteins and together with SGTA and ASNA1 mediates their delivery to the endoplasmic reticulum. Client proteins that cannot be properly delivered to the endoplasmic reticulum are ubiquitinated and sorted to the proteasome. Similarly, the BAG6/BAT3 complex also functions as a sorting platform for proteins of the secretory pathway that are mislocalized to the cytosol either delivering them to the proteasome for degradation or to the endoplasmic reticulum. The BAG6/BAT3 complex also plays a role in the endoplasmic reticulum-associated degradation (ERAD), a quality control mechanism that eliminates unwanted proteins of the endoplasmic reticulum through their retrotranslocation to the cytosol and their targeting to the proteasome. It maintains these retrotranslocated proteins in an unfolded yet soluble state condition in the cytosol to ensure their proper delivery to the proteasome. The chain is Ubiquitin-like protein 4A (UBL4A) from Rhinolophus ferrumequinum (Greater horseshoe bat).